A 199-amino-acid polypeptide reads, in one-letter code: DnaJ homolog subfamily C member 5B (199 aa).

Residues Ser-14 and Ser-16 each carry the phosphoserine modification. Positions Ala-19–Gly-84 constitute a J domain.

Interacts with the chaperone complex consisting of HSC70 and SGTA. In terms of processing, palmitoylated.

The protein localises to the membrane. The protein is DnaJ homolog subfamily C member 5B (DNAJC5B) of Bos taurus (Bovine).